A 279-amino-acid chain; its full sequence is Phosphate import ATP-binding protein PstB (279 aa).

The ABC transporter domain occupies 33–274 (LDINKLNLFY…PLKKKTEDYI (242 aa)). 65-72 (GPSGCGKS) contributes to the ATP binding site.

Belongs to the ABC transporter superfamily. Phosphate importer (TC 3.A.1.7) family. In terms of assembly, the complex is composed of two ATP-binding proteins (PstB), two transmembrane proteins (PstC and PstA) and a solute-binding protein (PstS).

It localises to the cell inner membrane. The enzyme catalyses phosphate(out) + ATP + H2O = ADP + 2 phosphate(in) + H(+). Part of the ABC transporter complex PstSACB involved in phosphate import. Responsible for energy coupling to the transport system. The sequence is that of Phosphate import ATP-binding protein PstB from Colwellia psychrerythraea (strain 34H / ATCC BAA-681) (Vibrio psychroerythus).